The primary structure comprises 322 residues: MSAKSRTIGIIGAPFSKGQPRGGVEEGPTVLRKAGLLEKLKEQECDVKDYGDLPFADIPNDSPFQIVKNPRSVGKASEQLAGKVAEVKKNGRISLVLGGDHSLAIGSISGHARVHPDLGVIWVDAHTDINTPLTTTSGNLHGQPVSFLLKELKGKIPDVPGFSWVTPCISAKDIVYIGLRDVDPGEHYILKTLGIKYFSMTEVDRLGIGKVMEETLSYLLGRKKRPIHLSFDVDGLDPSFTPATGTPVVGGLTYREGLYITEEIYKTGLLSGLDIMEVNPSLGKTPEEVTRTVNTAVAITLACFGLAREGNHKPIDYLNPPK.

N6-succinyllysine is present on Lys-17. Phosphoserine occurs at positions 62 and 72. Lys-75 carries the post-translational modification N6-succinyllysine. Mn(2+) is bound by residues His-101, Asp-124, His-126, and Asp-128. Residues 126–130 (HTDIN) and 137–139 (SGN) each bind substrate. Residue Ser-163 is modified to Phosphoserine. Asp-183 contributes to the substrate binding site. A Phosphoserine modification is found at Ser-217. Mn(2+) contacts are provided by Asp-232 and Asp-234. Substrate contacts are provided by Thr-246 and Glu-277.

Belongs to the arginase family. As to quaternary structure, homotrimer. Interacts with CMTM6. Requires Mn(2+) as cofactor. Within the immune system initially reported to be selectively expressed in granulocytes (polymorphonuclear leukocytes [PMNs]). Also detected in macrophages mycobacterial granulomas. Expressed in group2 innate lymphoid cells (ILC2s) during lung disease.

The protein resides in the cytoplasm. It is found in the cytoplasmic granule. The catalysed reaction is L-arginine + H2O = urea + L-ornithine. It functions in the pathway nitrogen metabolism; urea cycle; L-ornithine and urea from L-arginine: step 1/1. Functionally, key element of the urea cycle converting L-arginine to urea and L-ornithine, which is further metabolized into metabolites proline and polyamides that drive collagen synthesis and bioenergetic pathways critical for cell proliferation, respectively; the urea cycle takes place primarily in the liver and, to a lesser extent, in the kidneys. Its function is as follows. Functions in L-arginine homeostasis in nonhepatic tissues characterized by the competition between nitric oxide synthase (NOS) and arginase for the available intracellular substrate arginine. Arginine metabolism is a critical regulator of innate and adaptive immune responses. Involved in an antimicrobial effector pathway in polymorphonuclear granulocytes (PMN). Upon PMN cell death is liberated from the phagolysosome and depletes arginine in the microenvironment leading to suppressed T cell and natural killer (NK) cell proliferation and cytokine secretion. In group 2 innate lymphoid cells (ILC2s) promotes acute type 2 inflammation in the lung and is involved in optimal ILC2 proliferation but not survival. In humans, the immunological role in the monocytic/macrophage/dendritic cell (DC) lineage is unsure. The protein is Arginase-1 (ARG1) of Homo sapiens (Human).